Reading from the N-terminus, the 275-residue chain is Probable endonuclease 4 (275 aa).

Positions 66, 106, 140, 172, 175, 209, 222, 224, and 254 each coordinate Zn(2+).

It belongs to the AP endonuclease 2 family. It depends on Zn(2+) as a cofactor.

The enzyme catalyses Endonucleolytic cleavage to 5'-phosphooligonucleotide end-products.. Endonuclease IV plays a role in DNA repair. It cleaves phosphodiester bonds at apurinic or apyrimidinic (AP) sites, generating a 3'-hydroxyl group and a 5'-terminal sugar phosphate. In Halobacterium salinarum (strain ATCC 29341 / DSM 671 / R1), this protein is Probable endonuclease 4.